The sequence spans 72 residues: Protein RALF-like 12 (72 aa).

The N-terminal stretch at 1-17 (MKAWVIGLLVICAVVIA) is a signal peptide. 2 cysteine pairs are disulfide-bonded: Cys-34/Cys-43 and Cys-63/Cys-69. Residues 37–60 (PNPPPGCNPPGTEQKNPTPVNEYS) form a disordered region.

Belongs to the plant rapid alkalinization factor (RALF) family.

The protein localises to the secreted. In terms of biological role, cell signaling peptide that may regulate plant stress, growth, and development. Mediates a rapid alkalinization of extracellular space by mediating a transient increase in the cytoplasmic Ca(2+) concentration leading to a calcium-dependent signaling events through a cell surface receptor and a concomitant activation of some intracellular mitogen-activated protein kinases. This chain is Protein RALF-like 12 (RALFL12), found in Arabidopsis thaliana (Mouse-ear cress).